A 189-amino-acid chain; its full sequence is Phosphoheptose isomerase (189 aa).

Residues 34–189 (LVEAFRKGNK…CDLVEKALFA (156 aa)) enclose the SIS domain. Residue 49–51 (NGG) participates in substrate binding. 2 residues coordinate Zn(2+): histidine 58 and glutamate 62. Substrate contacts are provided by residues glutamate 62, 91–92 (ND), 117–119 (STS), serine 122, and glutamine 169. Glutamine 169 and histidine 177 together coordinate Zn(2+).

The protein belongs to the SIS family. GmhA subfamily. As to quaternary structure, homotetramer. Zn(2+) serves as cofactor.

Its subcellular location is the cytoplasm. The catalysed reaction is 2 D-sedoheptulose 7-phosphate = D-glycero-alpha-D-manno-heptose 7-phosphate + D-glycero-beta-D-manno-heptose 7-phosphate. The protein operates within carbohydrate biosynthesis; D-glycero-D-manno-heptose 7-phosphate biosynthesis; D-glycero-alpha-D-manno-heptose 7-phosphate and D-glycero-beta-D-manno-heptose 7-phosphate from sedoheptulose 7-phosphate: step 1/1. Functionally, catalyzes the isomerization of sedoheptulose 7-phosphate in D-glycero-D-manno-heptose 7-phosphate. In Pelobacter propionicus (strain DSM 2379 / NBRC 103807 / OttBd1), this protein is Phosphoheptose isomerase.